Consider the following 445-residue polypeptide: Tubulin beta-1 chain (445 aa).

An MREI motif motif is present at residues 1 to 4 (MREI). GTP-binding residues include Q11, E69, S138, G142, T143, G144, N204, and N226. E69 serves as a coordination point for Mg(2+). The interval 425–445 (YQDATAEEEGEFEEEGEEELA) is disordered. Residues 429 to 445 (TAEEEGEFEEEGEEELA) are compositionally biased toward acidic residues. E438 carries the 5-glutamyl polyglutamate modification.

Belongs to the tubulin family. In terms of assembly, dimer of alpha and beta chains. A typical microtubule is a hollow water-filled tube with an outer diameter of 25 nm and an inner diameter of 15 nM. Alpha-beta heterodimers associate head-to-tail to form protofilaments running lengthwise along the microtubule wall with the beta-tubulin subunit facing the microtubule plus end conferring a structural polarity. Microtubules usually have 13 protofilaments but different protofilament numbers can be found in some organisms and specialized cells. Requires Mg(2+) as cofactor. Post-translationally, some glutamate residues at the C-terminus are polyglycylated, resulting in polyglycine chains on the gamma-carboxyl group. Glycylation is mainly limited to tubulin incorporated into axonemes (cilia and flagella) whereas glutamylation is prevalent in neuronal cells, centrioles, axonemes, and the mitotic spindle. Both modifications can coexist on the same protein on adjacent residues, and lowering polyglycylation levels increases polyglutamylation, and reciprocally. The precise function of polyglycylation is still unclear. In terms of processing, some glutamate residues at the C-terminus are polyglutamylated, resulting in polyglutamate chains on the gamma-carboxyl group. Polyglutamylation plays a key role in microtubule severing by spastin (SPAST). SPAST preferentially recognizes and acts on microtubules decorated with short polyglutamate tails: severing activity by SPAST increases as the number of glutamates per tubulin rises from one to eight, but decreases beyond this glutamylation threshold.

Its subcellular location is the cytoplasm. It localises to the cytoskeleton. In terms of biological role, tubulin is the major constituent of microtubules, a cylinder consisting of laterally associated linear protofilaments composed of alpha- and beta-tubulin heterodimers. Microtubules grow by the addition of GTP-tubulin dimers to the microtubule end, where a stabilizing cap forms. Below the cap, tubulin dimers are in GDP-bound state, owing to GTPase activity of alpha-tubulin. This is Tubulin beta-1 chain from Gadus morhua (Atlantic cod).